The chain runs to 496 residues: Trimethylamine methyltransferase MttB (496 aa).

Residue pyrrolysine 331 is a non-standard amino acid, pyrrolysine.

The protein belongs to the trimethylamine methyltransferase family.

It carries out the reaction Co(I)-[trimethylamine-specific corrinoid protein] + trimethylamine + H(+) = methyl-Co(III)-[trimethylamine-specific corrinoid protein] + dimethylamine. Catalyzes the transfer of a methyl group from trimethylamine to the corrinoid cofactor of MttC. This Desulfitobacterium hafniense (strain DSM 10664 / DCB-2) protein is Trimethylamine methyltransferase MttB.